A 328-amino-acid polypeptide reads, in one-letter code: Flap endonuclease 1 (328 aa).

Residues 1-98 are N-domain; the sequence is MGVKFKDITN…ETQEERINIK (98 aa). Residues Asp27, Asp80, Glu152, Glu154, Asp173, Asp175, and Asp227 each coordinate Mg(2+). The I-domain stretch occupies residues 116 to 248; the sequence is AARKYAARTT…KGIKLIHKYG (133 aa). Positions 320 to 328 are interaction with PCNA; sequence AQSSLEDWF.

The protein belongs to the XPG/RAD2 endonuclease family. FEN1 subfamily. As to quaternary structure, interacts with PCNA. PCNA stimulates the nuclease activity without altering cleavage specificity. Mg(2+) is required as a cofactor.

Functionally, structure-specific nuclease with 5'-flap endonuclease and 5'-3' exonuclease activities involved in DNA replication and repair. During DNA replication, cleaves the 5'-overhanging flap structure that is generated by displacement synthesis when DNA polymerase encounters the 5'-end of a downstream Okazaki fragment. Binds the unpaired 3'-DNA end and kinks the DNA to facilitate 5' cleavage specificity. Cleaves one nucleotide into the double-stranded DNA from the junction in flap DNA, leaving a nick for ligation. Also involved in the base excision repair (BER) pathway. Acts as a genome stabilization factor that prevents flaps from equilibrating into structures that lead to duplications and deletions. Also possesses 5'-3' exonuclease activity on nicked or gapped double-stranded DNA. In Methanosphaera stadtmanae (strain ATCC 43021 / DSM 3091 / JCM 11832 / MCB-3), this protein is Flap endonuclease 1.